The primary structure comprises 247 residues: Adenosylcobinamide-GDP ribazoletransferase (247 aa).

5 helical membrane-spanning segments follow: residues 34 to 54 (IVMFPFIGLILGGVSGLIFIL), 59 to 79 (CGIPLAALFCILALALLTGGF), 113 to 133 (GGLALIFVLLAKILVVSELAL), 138 to 158 (MLAALAAACAAGRGSAVLLMY), and 187 to 207 (LAVIVATVLLPGMQGLAAMVV).

Belongs to the CobS family. Requires Mg(2+) as cofactor.

The protein resides in the cell inner membrane. It carries out the reaction alpha-ribazole + adenosylcob(III)inamide-GDP = adenosylcob(III)alamin + GMP + H(+). The enzyme catalyses alpha-ribazole 5'-phosphate + adenosylcob(III)inamide-GDP = adenosylcob(III)alamin 5'-phosphate + GMP + H(+). It functions in the pathway cofactor biosynthesis; adenosylcobalamin biosynthesis; adenosylcobalamin from cob(II)yrinate a,c-diamide: step 7/7. Joins adenosylcobinamide-GDP and alpha-ribazole to generate adenosylcobalamin (Ado-cobalamin). Also synthesizes adenosylcobalamin 5'-phosphate from adenosylcobinamide-GDP and alpha-ribazole 5'-phosphate. This Salmonella dublin (strain CT_02021853) protein is Adenosylcobinamide-GDP ribazoletransferase.